A 289-amino-acid chain; its full sequence is ATP synthase subunit a (289 aa).

A run of 6 helical transmembrane segments spans residues Ala43–Phe63, Ser101–Val121, Leu160–Ile180, Ile193–Ala213, Val232–Ile252, and Ala259–Val279.

This sequence belongs to the ATPase A chain family. As to quaternary structure, F-type ATPases have 2 components, CF(1) - the catalytic core - and CF(0) - the membrane proton channel. CF(1) has five subunits: alpha(3), beta(3), gamma(1), delta(1), epsilon(1). CF(0) has three main subunits: a(1), b(2) and c(9-12). The alpha and beta chains form an alternating ring which encloses part of the gamma chain. CF(1) is attached to CF(0) by a central stalk formed by the gamma and epsilon chains, while a peripheral stalk is formed by the delta and b chains.

It localises to the cell inner membrane. Key component of the proton channel; it plays a direct role in the translocation of protons across the membrane. This is ATP synthase subunit a from Pseudomonas syringae pv. tomato (strain ATCC BAA-871 / DC3000).